The primary structure comprises 393 residues: Matrix metalloproteinase-23 (393 aa).

Residues 1–20 (MGRGACVPSAASGAGDRARQ) lie on the Cytoplasmic side of the membrane. The propeptide occupies 1–81 (MGRGACVPSA…PHPPVPRRRR (81 aa)). A helical; Signal-anchor for type II membrane protein membrane pass occupies residues 21 to 41 (LGAVLGALCLFPALVLLAWPG). Residues 42-393 (TPANGAGARV…TYSWRIRVRS (352 aa)) are Lumenal-facing. A disordered region spans residues 60-79 (TSGVLASGSLGPPHPPVPRR). Asn-95 and Asn-151 each carry an N-linked (GlcNAc...) asparagine glycan. His-214 contributes to the Zn(2+) binding site. Glu-215 is an active-site residue. Residues His-218 and His-224 each contribute to the Zn(2+) site. The N-linked (GlcNAc...) asparagine glycan is linked to Asn-235. Residues 258 to 292 (CLDRLFVCASWARRGFCDTRRRLMKRLCPSSCDFC) form the ShKT domain. Intrachain disulfides connect Cys-258-Cys-292, Cys-265-Cys-285, and Cys-274-Cys-289. An Ig-like C2-type domain is found at 298–383 (PTVAATPPPP…VVRRRQRVLS (86 aa)). A glycan (N-linked (GlcNAc...) asparagine) is linked at Asn-319. A disulfide bridge connects residues Cys-324 and Cys-373.

Belongs to the peptidase M10A family. Requires Zn(2+) as cofactor. In terms of processing, N-glycosylated. Proteolytic cleavage might yield an active form.

Its subcellular location is the membrane. It localises to the endoplasmic reticulum membrane. Its function is as follows. Protease. May regulate the surface expression of some potassium channels by retaining them in the endoplasmic reticulum. This is Matrix metalloproteinase-23 (MMP23) from Bos taurus (Bovine).